Reading from the N-terminus, the 240-residue chain is Vacuolar-sorting protein SNF7 (240 aa).

Position 72 is a phosphothreonine (Thr-72). Phosphoserine occurs at positions 119 and 193. The tract at residues 193–240 is disordered; sequence SENKVSLPSVPSNKIKQSENSVKDGEEEEDEEDEDEKALRELQAEMGL. Residues 195–212 show a composition bias toward polar residues; the sequence is NKVSLPSVPSNKIKQSEN. Residues 217-228 are compositionally biased toward acidic residues; that stretch reads GEEEEDEEDEDE. A Glycyl lysine isopeptide (Lys-Gly) (interchain with G-Cter in ubiquitin) cross-link involves residue Lys-229. Residues 229 to 240 are compositionally biased toward basic and acidic residues; that stretch reads KALRELQAEMGL.

This sequence belongs to the SNF7 family. As to quaternary structure, core component of the ESCRT-III complex (endosomal sorting required for transport complex III). ESCRT-III appears to be sequentially assembled as a flat lattice on the endosome membrane and forms a transient 450 kDa complex that contains DID4, oligomerized SNF7, VPS20 and VPS24. SNF7 polymerizes into spirals at the surface of lipid bilayers. SNF7 polymerization is nucleated by association of SNF7 with VPS20; the process is terminated through association of VPS24, possibly by capping the SNF7 filament. Interacts with VTA1; the interaction requires DID2. Interacts with BRO1. Interacts with DOA4. Interacts with HEH1 and HEH2. Interacts with RIM20 and YGR122W.

It localises to the cytoplasm. Its subcellular location is the endosome membrane. The protein localises to the nucleus envelope. Its function is as follows. Acts a component of the ESCRT-III complex required for the sorting and concentration of proteins resulting in the entry of these proteins into the invaginating vesicles of the multivesicular body (MVB). The sequential action of ESCRT-0, -I, and -II together with the ordered assembly of ESCRT-III links membrane invagination to cargo sorting. Membrane scission in the neck of the growing vesicle releases mature, cargo-laden ILVs into the lumen. ESCRT-III is critical for late steps in MVB sorting, such as membrane invagination and final cargo sorting and recruitment of late-acting components of the sorting machinery. SNF7 is the most abundant ESCRT-III subunit which forms membrane-sculpting filaments with 30 Angstrom periodicity and a exposed cationic membrane-binding surface. Its activation requires a prominent conformational rearrangement to expose protein-membrane and protein-protein interfaces. SNF7 filaments then form spirals that could function as spiral springs. The elastic expansion of compressed SNF7 spirals generates an area difference between the two sides of the membrane and thus curvature which could be the origin of membrane deformation leading eventually to fission. SNF7 recruits BRO1, which in turn recruits DOA4, which deubiquitinates cargos before their enclosure within MVB vesicles. ESCRT-III is also recruited to the nuclear envelope (NE) by integral INM proteins to surveil and clear defective nuclear pore complex (NPC) assembly intermediates to ensure the fidelity of NPC assembly. The protein is Vacuolar-sorting protein SNF7 of Saccharomyces cerevisiae (strain ATCC 204508 / S288c) (Baker's yeast).